The primary structure comprises 311 residues: Methionyl-tRNA formyltransferase (311 aa).

Residue 110 to 113 (SLLP) coordinates (6S)-5,6,7,8-tetrahydrofolate.

The protein belongs to the Fmt family.

It catalyses the reaction L-methionyl-tRNA(fMet) + (6R)-10-formyltetrahydrofolate = N-formyl-L-methionyl-tRNA(fMet) + (6S)-5,6,7,8-tetrahydrofolate + H(+). Attaches a formyl group to the free amino group of methionyl-tRNA(fMet). The formyl group appears to play a dual role in the initiator identity of N-formylmethionyl-tRNA by promoting its recognition by IF2 and preventing the misappropriation of this tRNA by the elongation apparatus. The protein is Methionyl-tRNA formyltransferase of Streptococcus pyogenes serotype M49 (strain NZ131).